A 210-amino-acid chain; its full sequence is Fibroblast growth factor 8 (210 aa).

Residues 1 to 27 (MRLIPSRLSYLFLHLFAFCYYAQVTIQ) form the signal peptide.

It belongs to the heparin-binding growth factors family. As to quaternary structure, monomer. Homodimer.

The protein resides in the secreted. Functionally, plays an important role in the regulation of embryonic development, cell proliferation, cell differentiation and cell migration. Required for Kupffer's vesicle ciliogenesis. The chain is Fibroblast growth factor 8 from Danio rerio (Zebrafish).